A 297-amino-acid chain; its full sequence is Cytidine deaminase (297 aa).

CMP/dCMP-type deaminase domains follow at residues 50 to 170 and 189 to 297; these read SDKE…FGPK and ETES…YASL. 91 to 93 serves as a coordination point for substrate; sequence NME. H104 is a binding site for Zn(2+). E106 functions as the Proton donor in the catalytic mechanism. Residues C131 and C134 each contribute to the Zn(2+) site.

It belongs to the cytidine and deoxycytidylate deaminase family. In terms of assembly, homodimer. It depends on Zn(2+) as a cofactor.

The catalysed reaction is cytidine + H2O + H(+) = uridine + NH4(+). It carries out the reaction 2'-deoxycytidine + H2O + H(+) = 2'-deoxyuridine + NH4(+). This enzyme scavenges exogenous and endogenous cytidine and 2'-deoxycytidine for UMP synthesis. This chain is Cytidine deaminase, found in Aliivibrio fischeri (strain ATCC 700601 / ES114) (Vibrio fischeri).